Here is a 113-residue protein sequence, read N- to C-terminus: Hydrogenase maturation factor HypA (113 aa).

His-2 lines the Ni(2+) pocket. Residues Cys-73, Cys-76, Cys-89, and Cys-92 each contribute to the Zn(2+) site.

Belongs to the HypA/HybF family.

In terms of biological role, involved in the maturation of [NiFe] hydrogenases. Required for nickel insertion into the metal center of the hydrogenase. In Rhodopseudomonas palustris (strain BisA53), this protein is Hydrogenase maturation factor HypA.